We begin with the raw amino-acid sequence, 212 residues long: Thymidylate kinase (212 aa).

Residue 10–17 (GLDGAGKT) coordinates ATP.

It belongs to the thymidylate kinase family.

The catalysed reaction is dTMP + ATP = dTDP + ADP. In terms of biological role, phosphorylation of dTMP to form dTDP in both de novo and salvage pathways of dTTP synthesis. The polypeptide is Thymidylate kinase (Blochmanniella pennsylvanica (strain BPEN)).